Consider the following 223-residue polypeptide: MRIADFDPENRPRERFIAHGPAALSSAELLAIVLRTGTRKNNILDTCNTLLSLHGLEALANMNLKELQKTSGIGPSKAMQITAIFELNKRLHYKRNTNRKIQGARDVYEYMQGRVPDETKEHLFVLHLNTKNQITKCEEVTIGTLNASLIHPREVFKAAIRESANAIILVHNHPSGDTEPSNADRQVTNLLKQASAVIQIDLLDHVIIGKTGWYSFRENNQLS.

In terms of domain architecture, MPN spans 100–222 (KIQGARDVYE…WYSFRENNQL (123 aa)). 3 residues coordinate Zn(2+): histidine 171, histidine 173, and aspartate 184. The JAMM motif signature appears at 171–184 (HNHPSGDTEPSNAD).

It belongs to the UPF0758 family.

The chain is UPF0758 protein Cvib_1178 from Chlorobium phaeovibrioides (strain DSM 265 / 1930) (Prosthecochloris vibrioformis (strain DSM 265)).